We begin with the raw amino-acid sequence, 141 residues long: Large ribosomal subunit protein uL16 (141 aa).

It belongs to the universal ribosomal protein uL16 family. As to quaternary structure, part of the 50S ribosomal subunit.

Binds 23S rRNA and is also seen to make contacts with the A and possibly P site tRNAs. The sequence is that of Large ribosomal subunit protein uL16 from Deinococcus geothermalis (strain DSM 11300 / CIP 105573 / AG-3a).